We begin with the raw amino-acid sequence, 288 residues long: Oxaloacetate decarboxylase (288 aa).

Substrate is bound at residue serine 47. Residue aspartate 85 participates in Mg(2+) binding. Positions 156 and 232 each coordinate substrate.

The protein belongs to the isocitrate lyase/PEP mutase superfamily. Oxaloacetate decarboxylase family. As to quaternary structure, homotetramer; dimer of dimers. The cofactor is Mg(2+).

The catalysed reaction is oxaloacetate + H(+) = pyruvate + CO2. Its function is as follows. Catalyzes the decarboxylation of oxaloacetate into pyruvate. Seems to play a role in maintaining cellular concentrations of bicarbonate and pyruvate. In Rhodopseudomonas palustris (strain BisB18), this protein is Oxaloacetate decarboxylase.